Reading from the N-terminus, the 126-residue chain is Desulfoferrodoxin (126 aa).

Residues Cys10, Cys13, Cys29, Cys30, His49, His69, His75, Cys116, and His119 each contribute to the Fe cation site.

This sequence belongs to the desulfoferrodoxin family. As to quaternary structure, homodimer. It depends on Fe(3+) as a cofactor. Cu(2+) is required as a cofactor.

The enzyme catalyses reduced [rubredoxin] + superoxide + 2 H(+) = oxidized [rubredoxin] + H2O2. Catalyzes the one-electron reduction of superoxide anion radical to hydrogen peroxide at a nonheme ferrous iron center. Plays a fundamental role in case of oxidative stress via its superoxide detoxification activity. The sequence is that of Desulfoferrodoxin (dfx) from Desulfarculus baarsii (strain ATCC 33931 / DSM 2075 / LMG 7858 / VKM B-1802 / 2st14).